We begin with the raw amino-acid sequence, 524 residues long: 2-isopropylmalate synthase (524 aa).

Positions Val-12–Thr-274 constitute a Pyruvate carboxyltransferase domain. Asp-21, His-209, His-211, and Asn-245 together coordinate Mn(2+). The segment at Lys-398 to Gly-524 is regulatory domain.

Belongs to the alpha-IPM synthase/homocitrate synthase family. LeuA type 1 subfamily. In terms of assembly, homodimer. Mn(2+) is required as a cofactor.

The protein resides in the cytoplasm. It carries out the reaction 3-methyl-2-oxobutanoate + acetyl-CoA + H2O = (2S)-2-isopropylmalate + CoA + H(+). The protein operates within amino-acid biosynthesis; L-leucine biosynthesis; L-leucine from 3-methyl-2-oxobutanoate: step 1/4. In terms of biological role, catalyzes the condensation of the acetyl group of acetyl-CoA with 3-methyl-2-oxobutanoate (2-ketoisovalerate) to form 3-carboxy-3-hydroxy-4-methylpentanoate (2-isopropylmalate). The polypeptide is 2-isopropylmalate synthase (Rhodopseudomonas palustris (strain TIE-1)).